A 265-amino-acid chain; its full sequence is uncharacterized protein (265 aa).

Positions 7, 9, 94, 130, 155, and 205 each coordinate a divalent metal cation.

It belongs to the metallo-dependent hydrolases superfamily. TatD-type hydrolase family. It depends on a divalent metal cation as a cofactor.

This is an uncharacterized protein from Escherichia coli O157:H7.